The sequence spans 502 residues: Cytochrome P450 3A5 (502 aa).

Residue cysteine 441 participates in heme binding.

The protein belongs to the cytochrome P450 family. The cofactor is heme.

It is found in the endoplasmic reticulum membrane. It localises to the microsome membrane. The enzyme catalyses an organic molecule + reduced [NADPH--hemoprotein reductase] + O2 = an alcohol + oxidized [NADPH--hemoprotein reductase] + H2O + H(+). It catalyses the reaction 17beta-estradiol + reduced [NADPH--hemoprotein reductase] + O2 = 2-hydroxy-17beta-estradiol + oxidized [NADPH--hemoprotein reductase] + H2O + H(+). The catalysed reaction is 17beta-estradiol + reduced [NADPH--hemoprotein reductase] + O2 = 4-hydroxy-17beta-estradiol + oxidized [NADPH--hemoprotein reductase] + H2O + H(+). It carries out the reaction estrone + reduced [NADPH--hemoprotein reductase] + O2 = 2-hydroxyestrone + oxidized [NADPH--hemoprotein reductase] + H2O + H(+). The enzyme catalyses estrone + reduced [NADPH--hemoprotein reductase] + O2 = 4-hydroxyestrone + oxidized [NADPH--hemoprotein reductase] + H2O + H(+). It catalyses the reaction testosterone + reduced [NADPH--hemoprotein reductase] + O2 = 6beta,17beta-dihydroxyandrost-4-en-3-one + oxidized [NADPH--hemoprotein reductase] + H2O + H(+). The catalysed reaction is androst-4-ene-3,17-dione + reduced [NADPH--hemoprotein reductase] + O2 = 6beta-hydroxyandrost-4-ene-3,17-dione + oxidized [NADPH--hemoprotein reductase] + H2O + H(+). It carries out the reaction progesterone + reduced [NADPH--hemoprotein reductase] + O2 = 6beta-hydroxyprogesterone + oxidized [NADPH--hemoprotein reductase] + H2O + H(+). The enzyme catalyses all-trans-retinol + reduced [NADPH--hemoprotein reductase] + O2 = all-trans-retinal + oxidized [NADPH--hemoprotein reductase] + 2 H2O + H(+). It catalyses the reaction all-trans-retinoate + reduced [NADPH--hemoprotein reductase] + O2 = all-trans-4-hydroxyretinoate + oxidized [NADPH--hemoprotein reductase] + H2O + H(+). The protein operates within steroid hormone biosynthesis. It participates in cofactor metabolism; retinol metabolism. Functionally, a cytochrome P450 monooxygenase involved in the metabolism of steroid hormones and vitamins. Mechanistically, uses molecular oxygen inserting one oxygen atom into a substrate, and reducing the second into a water molecule, with two electrons provided by NADPH via cytochrome P450 reductase (NADPH--hemoprotein reductase). Catalyzes the hydroxylation of carbon-hydrogen bonds. Exhibits high catalytic activity for the formation of catechol estrogens from 17beta-estradiol (E2) and estrone (E1), namely 2-hydroxy E1 and E2. Catalyzes 6beta-hydroxylation of the steroid hormones testosterone, progesterone, and androstenedione. Catalyzes the oxidative conversion of all-trans-retinol to all-trans-retinal, a rate-limiting step for the biosynthesis of all-trans-retinoic acid (atRA). Further metabolizes all trans-retinoic acid (atRA) to 4-hydroxyretinoate and may play a role in hepatic atRA clearance. Also involved in the oxidative metabolism of xenobiotics, including calcium channel blocking drug nifedipine and immunosuppressive drug cyclosporine. This chain is Cytochrome P450 3A5, found in Homo sapiens (Human).